The following is a 1139-amino-acid chain: MDESSELGGLETMDTLTELGDELTLGDIDEMLQFVSNQVGEFPDLFSEQLCSSFPGGGSSGSSSSSNSSSSSGSNSRGNGGAATDPGVQRSFSQVPLPTFSPSTASPQALALQVKVSPTPPRATPVLQPRPQPQPQPQPSAQLQQQTVMITPTFSTAPQTRIIQQPLIYQNAATSFQVLQAQVQSLVTSSQVQPVTIQQQVQTVQAQRVLTQTANGTLQTLAPATVQTVAAPQVQQVPVLVQPQIIKTDSLVLTTLKTDGSPVMAAVQNPALTALTTPLQTGALQVPTLVGSNGTILTTMPVMMGQEKVPIKQVPGGVKQLEPPKEGERRTTHNIIEKRYRSSINDKIIELKDLVMGTDAKMHKSGVLRKAIDYIKYLQQVNHKLRQENMVLKLANQKNKLLKGIDLGSLVDSDVDLKIEDFNQNVLLMSPPASDSGSQAGFSPYSIDSEPGSPLLDDAKVKDEPDSPPVALGMVDRSRILLCVLTFLGLSFSPLTSLLQWGGAHDTDQHPYSGSGRSVLSLESGSGGWFDWMMPTLLLWLVNGVIVLSVFVKLLVHGEPVIRPHTRSSVTFWRHRKQADLDLARGDFAAAAANLQTCLSVLGRALPTSRLDLACSLSWNVIRYSLQKLRLVRWILKKVFQRWRATPATAAGFEDEAKSSARDAALAYHRLHQLHITGKLPAGSTCSDVHMALCAVNLAECAEEKIPPSTLIEIHLTAAMGLKTGCGGKLGFLASYFLNRAQSLCGPEHSTVPDSLRWLCHPLGQKFFMERSWSIKSAAKESLYCAQRNPADPIAQVHQAFCKNLLERAVESLVKPQSKKKSGDQEDESCEFSSALEYLRLLHSFVDSVGFVTPPFSSSSVLKSALGPDIICRWWTSAVTMAISWLQGDDAAVRSHFTEVERIPKALEVTESPLVKAVFYACRAMHASLSGKGDGQQNSFCHCERASGHLWNSLNVSGATSDPSLNHVVQLLTCDLLLSLRTALWQKQAGASQGLGETYHASGTELAGFQRDLGSLRRLAHSFRPAYRKVFLHEPTVRLMAGANPTRTHQLLEHSLRRRTSQNTKHGEIDTWPGQRERATAILLACRHLPLSFLSSPGQRAVLLAEAARTLEKVGDRRSCNDCQQMIVKLGGGTAIAAS.

The tract at residues 1 to 50 is transcriptional activation (acidic); the sequence is MDESSELGGLETMDTLTELGDELTLGDIDEMLQFVSNQVGEFPDLFSEQL. Over 1-479 the chain is Cytoplasmic; sequence MDESSELGGL…VALGMVDRSR (479 aa). Disordered stretches follow at residues 48–104 and 119–143; these read EQLC…SPST and TPPR…SAQL. A compositionally biased stretch (low complexity) spans 61–77; sequence GSSSSSNSSSSSGSNSR. The segment covering 90 to 104 has biased composition (polar residues); it reads RSFSQVPLPTFSPST. A compositionally biased stretch (pro residues) spans 119–138; it reads TPPRATPVLQPRPQPQPQPQ. The segment at 235–489 is interaction with LMNA; it reads QQVPVLVQPQ…ILLCVLTFLG (255 aa). Residues 328–378 enclose the bHLH domain; it reads ERRTTHNIIEKRYRSSINDKIIELKDLVMGTDAKMHKSGVLRKAIDYIKYL. The segment at 378-399 is leucine-zipper; the sequence is LQQVNHKLRQENMVLKLANQKN. Residue Lys462 forms a Glycyl lysine isopeptide (Lys-Gly) (interchain with G-Cter in SUMO2) linkage. Residues 480–500 traverse the membrane as a helical segment; the sequence is ILLCVLTFLGLSFSPLTSLLQ. Over 501–531 the chain is Lumenal; it reads WGGAHDTDQHPYSGSGRSVLSLESGSGGWFD. Residues 532–552 traverse the membrane as a helical segment; that stretch reads WMMPTLLLWLVNGVIVLSVFV. At 553 to 1139 the chain is on the cytoplasmic side; it reads KLLVHGEPVI…LGGGTAIAAS (587 aa). Ser1096 carries the post-translational modification Phosphoserine.

This sequence belongs to the SREBP family. As to quaternary structure, homodimer; efficient DNA binding of the soluble transcription factor fragment requires dimerization with another bHLH protein. Interacts with LMNA. In terms of assembly, forms a tight complex with SCAP, the SCAP-SREBP complex, in the endoplasmic reticulum membrane and the Golgi apparatus. Interacts with PAQR3; the interaction anchors the SCAP-SREBP complex to the Golgi apparatus in low cholesterol conditions. Interacts (via C-terminal domain) with RNF139. Processed in the Golgi apparatus, releasing the protein from the membrane. At low cholesterol the SCAP-SREBP complex is recruited into COPII vesicles for export from the endoplasmic reticulum. In the Golgi, complex SREBPs are cleaved sequentially by site-1 (MBTPS1, S1P) and site-2 (MBTPS2, S2P) proteases. The first cleavage by site-1 protease occurs within the luminal loop, the second cleavage by site-2 protease occurs within the first transmembrane domain, releasing the transcription factor from the Golgi membrane. Apoptosis triggers cleavage by the cysteine proteases caspase-3 and caspase-7. Cleavage and activation is induced by mediated cholesterol efflux. In terms of processing, phosphorylated by AMPK, leading to suppress protein processing and nuclear translocation, and repress target gene expression. Post-translationally, SCAP-free SREBF2 is ubiquitinated by the BCR(ARMC5) complex, leading to its degradation. Ubiquitinated; the nuclear form has a rapid turnover and is rapidly ubiquitinated and degraded by the proteasome in the nucleus.

The protein resides in the endoplasmic reticulum membrane. It is found in the golgi apparatus membrane. It localises to the cytoplasmic vesicle. Its subcellular location is the COPII-coated vesicle membrane. The protein localises to the nucleus. With respect to regulation, activation by cleavage is down-regulated upon activation of SIRT3-dependent PRKAA1/AMPK-alpha signaling cascade which leads to inhibition of ATP-consuming lipogenesis to restore cellular energy balance. Precursor of the transcription factor form (Processed sterol regulatory element-binding protein 2), which is embedded in the endoplasmic reticulum membrane. Low sterol concentrations promote processing of this form, releasing the transcription factor form that translocates into the nucleus and activates transcription of genes involved in cholesterol biosynthesis. Its function is as follows. Key transcription factor that regulates expression of genes involved in cholesterol biosynthesis. Binds to the sterol regulatory element 1 (SRE-1) (5'-ATCACCCCAC-3'). Has dual sequence specificity binding to both an E-box motif (5'-ATCACGTGA-3') and to SRE-1 (5'-ATCACCCCAC-3'). Regulates transcription of genes related to cholesterol synthesis pathway. The protein is Sterol regulatory element-binding protein 2 (SREBF2) of Cricetulus griseus (Chinese hamster).